The following is a 1056-amino-acid chain: Potassium transporter TRK1 (1056 aa).

Residues 1 to 46 (MLYRVSGFYKRHTRNFTNIDYGYYIRNFIHHIASKIYPYAKVVLPN) are Cytoplasmic-facing. Residues 47–67 (FRAAHYFYILTLVILGSILVY) traverse the membrane as a helical segment. The Extracellular segment spans residues 68-73 (PVKTCA). Residues 74 to 90 (YIDVLFFTAGASTQAGL) lie within the membrane without spanning it. The Extracellular segment spans residues 91 to 99 (NTVNVNDLS). Residues 100–122 (LYQQIVLYLLATLATPIFIHGSL) form a helical membrane-spanning segment. The Cytoplasmic segment spans residues 123–622 (LFVRLYYFER…LGGIEYRAVK (500 aa)). Disordered regions lie at residues 180 to 276 (REAE…IDPE), 290 to 350 (KNQE…EDED), and 404 to 571 (PWTS…SIEN). The segment covering 186 to 203 (SSSSPQSSSSQTSQPVST) has biased composition (low complexity). Residues 236–245 (EKIHFEEPQR) show a composition bias toward basic and acidic residues. Positions 335–344 (PATNSVGTGN) are enriched in polar residues. Over residues 412 to 423 (TLSNSSKKGSLS) the composition is skewed to low complexity. Composition is skewed to acidic residues over residues 428–449 (DTED…SDIS) and 469–487 (YEED…DDGE). The span at 521–533 (RSNTLDTPQQNTS) shows a compositional bias: polar residues. Basic residues predominate over residues 537–549 (KIRKKAPKRKTPR). Positions 553–563 (NASFNQHSNVS) are enriched in polar residues. The helical transmembrane segment at 623 to 646 (LLIKIIVVYYVGFNIIPGVMLSIW) threads the bilayer. Residues 647 to 665 (IYCMPHYKNLMISSSISPA) lie on the Extracellular side of the membrane. An intramembrane segment occupies 666–682 (WWAFFTSQSSFNDLGLT). At 683-693 (LTSNSMMSFNQ) the chain is on the extracellular side. The chain crosses the membrane as a helical span at residues 694–710 (NAFVQILCSFLIVIGNT). The Cytoplasmic segment spans residues 711 to 754 (GFPILLRFIIWVMFKTARPLSLYKESLGFLLDHPRRCFTLLFPS). Residues 755–778 (VPTWWLFFILVVLNGFDLVIFCIL) form a helical membrane-spanning segment. The Extracellular segment spans residues 779-793 (DLHDDTFKGVDMGYR). The stretch at 794–810 (VLNGLFQAFCTRTVGFS) is an intramembrane region. At 811 to 817 (VMDLSQL) the chain is on the extracellular side. A helical membrane pass occupies residues 818-841 (HAATQVSYLIMMYISVLPIAISVR). Residues 842-874 (RTNVYEEQSLGVYAKENAEGVDESAPSNYVGSH) are Cytoplasmic-facing. The helical transmembrane segment at 875-896 (LRNQLSYDLWYICLGLFIICIA) threads the bilayer. The Extracellular segment spans residues 897–909 (EGKRLKEQDLRFS). The stretch at 910–928 (IFAVLFEIVSAYGTVGMSM) is an intramembrane region. Residues 929–942 (GYPGVDCSLSGEFN) are Extracellular-facing. Residues 943 to 965 (VISKLVIIAMMIRGRHRGLPYTI) form a helical membrane-spanning segment. The Cytoplasmic portion of the chain corresponds to 966–1056 (DRAIMLPNAA…RYVVRTVSEV (91 aa)).

This sequence belongs to the TrkH potassium transport family.

The protein localises to the cell membrane. It carries out the reaction K(+)(in) = K(+)(out). The catalysed reaction is chloride(in) = chloride(out). TRK1-mediated chloride conductance is blocked by 4,4'-diisothiocyanatostilbene-2,2'-disulfonic acid. Its function is as follows. Potassium transporter that mediates K(+) influx, as well as Cl(-) efflux as a secondary function. TRK1 is the major K(+) uptake transporter that regulates membrane potential and intracellular pH. The TRK1-mediated Cl(-) efflux should serve as a Cl(-) detoxification route and may play a role in sustaining C.albicans on mammalian epithelial surfaces, or in physiological saline solutions such as saliva. In terms of biological role, mediates candidacidal activities of cysteine-free peptides, but not of defensins. The hallmark of salivary gland-secreted histatin-5 (Hst 5) killing of C.albicans is the rapid efflux of cellular ATP and other small nucleotides and ions from the cell as well as concurrent intracellular uptake of propidium iodide (PI). TRK1 is the channel for Hst 5-induced killing and histatin-5 may directly or indirectly alter TRK1 function, allowing the efflux of larger anions, including ATP, and the influx of small cationic dyes, such as PI. In Candida albicans (strain SC5314 / ATCC MYA-2876) (Yeast), this protein is Potassium transporter TRK1.